A 173-amino-acid chain; its full sequence is Bifunctional protein PyrR (173 aa).

The PRPP-binding motif lies at 93–105 (VILVDDVLYTGRT).

This sequence belongs to the purine/pyrimidine phosphoribosyltransferase family. PyrR subfamily. Homodimer and homohexamer; in equilibrium.

It carries out the reaction UMP + diphosphate = 5-phospho-alpha-D-ribose 1-diphosphate + uracil. Regulates transcriptional attenuation of the pyrimidine nucleotide (pyr) operon by binding in a uridine-dependent manner to specific sites on pyr mRNA. This disrupts an antiterminator hairpin in the RNA and favors formation of a downstream transcription terminator, leading to a reduced expression of downstream genes. Functionally, also displays a weak uracil phosphoribosyltransferase activity which is not physiologically significant. The sequence is that of Bifunctional protein PyrR from Streptococcus thermophilus (strain CNRZ 1066).